The sequence spans 147 residues: Hemoglobin subunit beta (147 aa).

N-acetylvaline is present on V2. Positions 3-147 (HLTPEEKSAV…VANALAHKYH (145 aa)) constitute a Globin domain. T13 is modified (phosphothreonine). S45 is modified (phosphoserine). Position 60 is an N6-acetyllysine (K60). Residue H64 participates in heme b binding. Position 83 is an N6-acetyllysine (K83). Position 93 (H93) interacts with heme b. C94 is modified (S-nitrosocysteine). At K145 the chain carries N6-acetyllysine.

The protein belongs to the globin family. Heterotetramer of two alpha chains and two beta chains. As to expression, red blood cells.

Functionally, involved in oxygen transport from the lung to the various peripheral tissues. In Gorilla gorilla gorilla (Western lowland gorilla), this protein is Hemoglobin subunit beta (HBB).